The chain runs to 608 residues: Probable potassium transport system protein Kup (608 aa).

The next 12 membrane-spanning stretches (helical) occupy residues 9-29, 46-66, 99-119, 137-157, 165-185, 213-233, 247-267, 285-305, 337-357, 363-383, 396-416, and 419-439; these read LSGV…TSPL, PAAI…VVSV, TPVL…EVVI, PSLD…LFAI, VGKL…VLGL, TSFF…ALYA, WFVV…ALLL, ALLP…QAVI, IYIP…IMSF, LAAA…ILFC, LVAA…AANL, and IFSG…LMTS.

Belongs to the HAK/KUP transporter (TC 2.A.72) family.

The protein resides in the cell inner membrane. It carries out the reaction K(+)(in) + H(+)(in) = K(+)(out) + H(+)(out). Functionally, transport of potassium into the cell. Likely operates as a K(+):H(+) symporter. In Aeromonas salmonicida (strain A449), this protein is Probable potassium transport system protein Kup.